Reading from the N-terminus, the 342-residue chain is MLVLGIESSCDETGLALYDTQRGLLAHALYSQVKMHEEYGGVVPELASRDHIRRAIPLLEQVFSESGVAHGAIDAIAYTQGPGLAGALLVGASVACGLGLALDKPVLGIHHLEGHLLSPLLASEPPEFPFIALLVSGGHTQLMRVDGIGQYTMLGETLDDAAGEAFDKSAKLLGLGYPGGPAISRMAEFGDPTAYKLPRPMLHSKNLDFSFSGLKTAVLTVVKNQTTNICEQDKANIARAFVDAIVEVLTAKCVTALKHTGLKRLVIAGGVGANQQLRESLNAAAAKKHFKVFYPELEFCTDNGAMIAFAGAMRLQINPDAAKKDYAFNVKPRWPLDSIREI.

Fe cation is bound by residues His-111 and His-115. Substrate contacts are provided by residues 134–138 (LVSGG), Asp-167, Gly-180, and Asn-274. Asp-302 lines the Fe cation pocket.

It belongs to the KAE1 / TsaD family. Fe(2+) serves as cofactor.

It is found in the cytoplasm. The catalysed reaction is L-threonylcarbamoyladenylate + adenosine(37) in tRNA = N(6)-L-threonylcarbamoyladenosine(37) in tRNA + AMP + H(+). Its function is as follows. Required for the formation of a threonylcarbamoyl group on adenosine at position 37 (t(6)A37) in tRNAs that read codons beginning with adenine. Is involved in the transfer of the threonylcarbamoyl moiety of threonylcarbamoyl-AMP (TC-AMP) to the N6 group of A37, together with TsaE and TsaB. TsaD likely plays a direct catalytic role in this reaction. This is tRNA N6-adenosine threonylcarbamoyltransferase from Herminiimonas arsenicoxydans.